A 344-amino-acid chain; its full sequence is Heat-inducible transcription repressor HrcA (344 aa).

The protein belongs to the HrcA family.

Negative regulator of class I heat shock genes (grpE-dnaK-dnaJ and groELS operons). Prevents heat-shock induction of these operons. The chain is Heat-inducible transcription repressor HrcA from Streptococcus pneumoniae (strain 70585).